The primary structure comprises 183 residues: Peptidyl-tRNA hydrolase (183 aa).

Y14 is a tRNA binding site. The active-site Proton acceptor is H19. TRNA contacts are provided by Y64, N66, and N112.

It belongs to the PTH family. As to quaternary structure, monomer.

It localises to the cytoplasm. It carries out the reaction an N-acyl-L-alpha-aminoacyl-tRNA + H2O = an N-acyl-L-amino acid + a tRNA + H(+). Hydrolyzes ribosome-free peptidyl-tRNAs (with 1 or more amino acids incorporated), which drop off the ribosome during protein synthesis, or as a result of ribosome stalling. In terms of biological role, catalyzes the release of premature peptidyl moieties from peptidyl-tRNA molecules trapped in stalled 50S ribosomal subunits, and thus maintains levels of free tRNAs and 50S ribosomes. In Anaplasma phagocytophilum (strain HZ), this protein is Peptidyl-tRNA hydrolase.